A 304-amino-acid chain; its full sequence is Acetyl-coenzyme A carboxylase carboxyl transferase subunit beta (304 aa).

The CoA carboxyltransferase N-terminal domain occupies 23–292 (VWTKCDSCGQ…PNPDAPREGV (270 aa)). The Zn(2+) site is built by Cys-27, Cys-30, Cys-46, and Cys-49. Residues 27–49 (CDSCGQVLYRAELERNLEVCPKC) form a C4-type zinc finger. The segment at 284–304 (NPDAPREGVVVPPAPGQESEA) is disordered.

The protein belongs to the AccD/PCCB family. As to quaternary structure, acetyl-CoA carboxylase is a heterohexamer composed of biotin carboxyl carrier protein (AccB), biotin carboxylase (AccC) and two subunits each of ACCase subunit alpha (AccA) and ACCase subunit beta (AccD). Requires Zn(2+) as cofactor.

It localises to the cytoplasm. It carries out the reaction N(6)-carboxybiotinyl-L-lysyl-[protein] + acetyl-CoA = N(6)-biotinyl-L-lysyl-[protein] + malonyl-CoA. It functions in the pathway lipid metabolism; malonyl-CoA biosynthesis; malonyl-CoA from acetyl-CoA: step 1/1. Its function is as follows. Component of the acetyl coenzyme A carboxylase (ACC) complex. Biotin carboxylase (BC) catalyzes the carboxylation of biotin on its carrier protein (BCCP) and then the CO(2) group is transferred by the transcarboxylase to acetyl-CoA to form malonyl-CoA. In Salmonella arizonae (strain ATCC BAA-731 / CDC346-86 / RSK2980), this protein is Acetyl-coenzyme A carboxylase carboxyl transferase subunit beta.